The following is a 444-amino-acid chain: E1B 55 kDa protein (444 aa).

Positions 1-42 are disordered; it reads MEQDSDLESGRATNQRPPRVRVRGAGVRGRGRVRRRALSEGQ. A phosphoserine mark is found at serine 438 and serine 439.

This sequence belongs to the adenoviridae E1B 55 kDa protein family. As to quaternary structure, interacts with host PML-4 and PML-5; this interaction promotes efficient subnuclear targeting of E1B-55K to PML nuclear bodies. Interacts with E4-ORF3 protein. Interacts with E4-ORF6 protein.

It is found in the host nucleus. It localises to the host cytoplasm. Its function is as follows. Plays a major role to prevent cellular inhibition of viral genome replication. Assembles an SCF-like E3 ubiquitin ligase complex based on the cellular proteins ELOB, ELOC, CUL5 and RBX1, in cooperation with viral E4orf6. This viral RING-type ligase ubiquitinates cellular substrates and targets them to proteasomal degradation: TP53/p53, LIG4, MRE11-RAD50-NBS1 (MRN) complex, ITGA3, DAXX and BLM. E1B-55K probably acts as the substrate-specific adapter of the SCF-like E3 ubiquitin ligase complex. Degradation of host TP53/p53 activity is essential for preventing E1A-induced TP53 accumulation that would otherwise lead to cell apoptosis and growth arrest. E1B-55K also inactivates TP53 transcription-factor activity by binding its transactivation domain. E1B-55K also functions as a SUMO1 E3 ligase for TP53 which causes the latter to be sequestered in promyelocytic leukemia (PML) nuclear bodies thereby contributing to maximal inhibition of TP53 function. The sequence is that of E1B 55 kDa protein from Canis lupus familiaris (Dog).